A 229-amino-acid chain; its full sequence is Peptidase E (229 aa).

Catalysis depends on charge relay system residues serine 120, aspartate 135, and histidine 157.

Belongs to the peptidase S51 family.

It is found in the cytoplasm. The enzyme catalyses Dipeptidase E catalyzes the hydrolysis of dipeptides Asp-|-Xaa. It does not act on peptides with N-terminal Glu, Asn or Gln, nor does it cleave isoaspartyl peptides.. Functionally, hydrolyzes dipeptides containing N-terminal aspartate residues. May play a role in allowing the cell to use peptide aspartate to spare carbon otherwise required for the synthesis of the aspartate family of amino acids. The chain is Peptidase E from Salmonella schwarzengrund (strain CVM19633).